A 343-amino-acid polypeptide reads, in one-letter code: Palmitoyltransferase ZDHHC4 (343 aa).

The Lumenal segment spans residues 1 to 2 (MD). Residues 3–23 (FLVLFSFYLAFLLICVIMICI) form a helical membrane-spanning segment. The Cytoplasmic segment spans residues 24–67 (FTKSQRLKAVVLGGAQVCARVTPQCFQRAVQTLLHQLFHTRHPA). Residues 68-88 (FLALHLLLQGLVYAEYTYEVF) form a helical membrane-spanning segment. Residues 89–95 (SYCRELE) are Lumenal-facing. The helical transmembrane segment at 96-116 (FSLPCLLLPYVLLSVNLVFFT) threads the bilayer. Residues 117 to 193 (LTCSTNPGTI…NCIGAWNTGY (77 aa)) are Cytoplasmic-facing. The DHHC domain occupies 149–199 (SRCSTCDLRKPARSKHCRVCDRCVHRFDHHCVWVNNCIGAWNTGYFLIYLL). Catalysis depends on Cys179, which acts as the S-palmitoyl cysteine intermediate. The helical transmembrane segment at 194–214 (FLIYLLTLTASAATIAILSAA) threads the bilayer. The Lumenal portion of the chain corresponds to 215–255 (FLLRLVAVSNLYQETYLDDLGRFQAVDTGFLIQHLFLAFPR). The chain crosses the membrane as a helical span at residues 256–276 (IIFLLGFVIVLSLLLAGYLCF). Topologically, residues 277–343 (ALYLAATNQT…ATPSYKKKKR (67 aa)) are cytoplasmic. The short motif at 340–343 (KKKR) is the Di-lysine motif element.

This sequence belongs to the DHHC palmitoyltransferase family. Interacts with CPT1A.

It is found in the endoplasmic reticulum membrane. It localises to the golgi apparatus membrane. The protein localises to the cell membrane. It carries out the reaction L-cysteinyl-[protein] + hexadecanoyl-CoA = S-hexadecanoyl-L-cysteinyl-[protein] + CoA. In terms of biological role, palmitoyltransferase that could catalyze the addition of palmitate onto protein substrates including the D(2) dopamine receptor DRD2, GSK3B or MAVS. Mediates GSK3B palmitoylation to prevent its AKT1-mediated phosphorylation leading to activation of the STAT3 signaling pathway. Also catalyzes MAVS palmitoylation which promotes its stabilization and activation by inhibiting 'Lys-48'- but facilitating 'Lys-63'-linked ubiquitination. The chain is Palmitoyltransferase ZDHHC4 from Rattus norvegicus (Rat).